Consider the following 186-residue polypeptide: MIEVNKFKPGITFQDSGNIYVVLEATHSKQGRGQANVKAKAKNLRTGATTILSFTGGDKVEPAHIEKRKMNFLYSDDSNIYLMDSSDYSQIEIDLLKVEWEMNFLKENSEVQVRMFQDEILDIELPANVDLKVTYAPDAVKGNTTTNPQKKVTLETNFELETPMFIKENDVIIVSTETGKYVGKSK.

Belongs to the elongation factor P family.

Its subcellular location is the cytoplasm. Its pathway is protein biosynthesis; polypeptide chain elongation. In terms of biological role, involved in peptide bond synthesis. Stimulates efficient translation and peptide-bond synthesis on native or reconstituted 70S ribosomes in vitro. Probably functions indirectly by altering the affinity of the ribosome for aminoacyl-tRNA, thus increasing their reactivity as acceptors for peptidyl transferase. The sequence is that of Elongation factor P from Mycoplasmopsis synoviae (strain 53) (Mycoplasma synoviae).